We begin with the raw amino-acid sequence, 92 residues long: Small ribosomal subunit protein uS19 (92 aa).

It belongs to the universal ribosomal protein uS19 family.

In terms of biological role, protein S19 forms a complex with S13 that binds strongly to the 16S ribosomal RNA. The protein is Small ribosomal subunit protein uS19 of Rickettsia bellii (strain OSU 85-389).